Reading from the N-terminus, the 32-residue chain is U6-ctenitoxin-Pr1a (32 aa).

Cystine bridges form between C3–C17, C10–C21, and C16–C30.

In terms of tissue distribution, expressed by the venom gland.

It is found in the secreted. The sequence is that of U6-ctenitoxin-Pr1a from Phoneutria reidyi (Brazilian Amazonian armed spider).